The primary structure comprises 369 residues: Phenylalanine--tRNA ligase alpha subunit (369 aa).

Residue glutamate 269 participates in Mg(2+) binding.

The protein belongs to the class-II aminoacyl-tRNA synthetase family. Phe-tRNA synthetase alpha subunit type 1 subfamily. As to quaternary structure, tetramer of two alpha and two beta subunits. Mg(2+) is required as a cofactor.

It localises to the cytoplasm. It catalyses the reaction tRNA(Phe) + L-phenylalanine + ATP = L-phenylalanyl-tRNA(Phe) + AMP + diphosphate + H(+). This is Phenylalanine--tRNA ligase alpha subunit from Brucella canis (strain ATCC 23365 / NCTC 10854 / RM-666).